A 592-amino-acid polypeptide reads, in one-letter code: Methionine--tRNA ligase (592 aa).

Positions 12–22 (PYANGPFHVGH) match the 'HIGH' region motif. Zn(2+) contacts are provided by cysteine 144, cysteine 147, cysteine 157, and cysteine 160. A 'KMSKS' region motif is present at residues 342 to 346 (KMSTS). Threonine 345 contributes to the ATP binding site.

It belongs to the class-I aminoacyl-tRNA synthetase family. MetG type 1 subfamily. In terms of assembly, monomer. Requires Zn(2+) as cofactor.

Its subcellular location is the cytoplasm. It carries out the reaction tRNA(Met) + L-methionine + ATP = L-methionyl-tRNA(Met) + AMP + diphosphate. Its function is as follows. Is required not only for elongation of protein synthesis but also for the initiation of all mRNA translation through initiator tRNA(fMet) aminoacylation. This chain is Methionine--tRNA ligase, found in Roseiflexus sp. (strain RS-1).